The primary structure comprises 892 residues: Bifunctional uridylyltransferase/uridylyl-removing enzyme (892 aa).

Residues 1 to 348 (MPNFTGNTRP…LVDAKVHVRP (348 aa)) form a uridylyltransferase region. The segment at 349–710 (INERFQARNG…RIHNQEPGTM (362 aa)) is uridylyl-removing. An HD domain is found at 467 to 589 (VDEHTLFLIH…VGDERRLNHL (123 aa)). 2 consecutive ACT domains span residues 711-786 (EVFI…LTQP) and 822-892 (VMEL…YLER).

This sequence belongs to the GlnD family. It depends on Mg(2+) as a cofactor.

The catalysed reaction is [protein-PII]-L-tyrosine + UTP = [protein-PII]-uridylyl-L-tyrosine + diphosphate. It carries out the reaction [protein-PII]-uridylyl-L-tyrosine + H2O = [protein-PII]-L-tyrosine + UMP + H(+). Uridylyltransferase (UTase) activity is inhibited by glutamine, while glutamine activates uridylyl-removing (UR) activity. In terms of biological role, modifies, by uridylylation and deuridylylation, the PII regulatory proteins (GlnB and homologs), in response to the nitrogen status of the cell that GlnD senses through the glutamine level. Under low glutamine levels, catalyzes the conversion of the PII proteins and UTP to PII-UMP and PPi, while under higher glutamine levels, GlnD hydrolyzes PII-UMP to PII and UMP (deuridylylation). Thus, controls uridylylation state and activity of the PII proteins, and plays an important role in the regulation of nitrogen assimilation and metabolism. The polypeptide is Bifunctional uridylyltransferase/uridylyl-removing enzyme (Nitrosococcus oceani (strain ATCC 19707 / BCRC 17464 / JCM 30415 / NCIMB 11848 / C-107)).